The chain runs to 375 residues: Queuine tRNA-ribosyltransferase (375 aa).

The Proton acceptor role is filled by aspartate 89. Substrate is bound by residues 89–93, aspartate 143, glutamine 187, and glycine 214; that span reads DSGGF. The segment at 245–251 is RNA binding; it reads GVGKPED. Aspartate 264 acts as the Nucleophile in catalysis. The RNA binding; important for wobble base 34 recognition stretch occupies residues 269 to 273; that stretch reads TRNAR. Zn(2+) contacts are provided by cysteine 302, cysteine 304, cysteine 307, and histidine 333.

Belongs to the queuine tRNA-ribosyltransferase family. As to quaternary structure, homodimer. Within each dimer, one monomer is responsible for RNA recognition and catalysis, while the other monomer binds to the replacement base PreQ1. It depends on Zn(2+) as a cofactor.

The enzyme catalyses 7-aminomethyl-7-carbaguanine + guanosine(34) in tRNA = 7-aminomethyl-7-carbaguanosine(34) in tRNA + guanine. The protein operates within tRNA modification; tRNA-queuosine biosynthesis. Catalyzes the base-exchange of a guanine (G) residue with the queuine precursor 7-aminomethyl-7-deazaguanine (PreQ1) at position 34 (anticodon wobble position) in tRNAs with GU(N) anticodons (tRNA-Asp, -Asn, -His and -Tyr). Catalysis occurs through a double-displacement mechanism. The nucleophile active site attacks the C1' of nucleotide 34 to detach the guanine base from the RNA, forming a covalent enzyme-RNA intermediate. The proton acceptor active site deprotonates the incoming PreQ1, allowing a nucleophilic attack on the C1' of the ribose to form the product. After dissociation, two additional enzymatic reactions on the tRNA convert PreQ1 to queuine (Q), resulting in the hypermodified nucleoside queuosine (7-(((4,5-cis-dihydroxy-2-cyclopenten-1-yl)amino)methyl)-7-deazaguanosine). This is Queuine tRNA-ribosyltransferase from Citrobacter koseri (strain ATCC BAA-895 / CDC 4225-83 / SGSC4696).